We begin with the raw amino-acid sequence, 262 residues long: Tryptophan synthase alpha chain (262 aa).

Residues glutamate 49 and aspartate 60 each act as proton acceptor in the active site.

It belongs to the TrpA family. In terms of assembly, tetramer of two alpha and two beta chains.

It catalyses the reaction (1S,2R)-1-C-(indol-3-yl)glycerol 3-phosphate + L-serine = D-glyceraldehyde 3-phosphate + L-tryptophan + H2O. It participates in amino-acid biosynthesis; L-tryptophan biosynthesis; L-tryptophan from chorismate: step 5/5. In terms of biological role, the alpha subunit is responsible for the aldol cleavage of indoleglycerol phosphate to indole and glyceraldehyde 3-phosphate. The chain is Tryptophan synthase alpha chain from Thermoanaerobacter pseudethanolicus (strain ATCC 33223 / 39E) (Clostridium thermohydrosulfuricum).